Here is a 319-residue protein sequence, read N- to C-terminus: Probable alcohol dehydrogenase (319 aa).

Positions 18, 39, 68, 71, 74, 82, and 149 each coordinate Zn(2+).

Belongs to the zinc-containing alcohol dehydrogenase family. Requires Zn(2+) as cofactor.

It catalyses the reaction a primary alcohol + NAD(+) = an aldehyde + NADH + H(+). The enzyme catalyses a secondary alcohol + NAD(+) = a ketone + NADH + H(+). The chain is Probable alcohol dehydrogenase (terPD) from Pseudomonas sp.